The chain runs to 135 residues: UPF0355 protein SH2586 (135 aa).

The interval 105-135 is disordered; that stretch reads NSSHDEVEENNSAYEEIDITHYANESKGPKS.

Belongs to the UPF0355 family.

In Staphylococcus haemolyticus (strain JCSC1435), this protein is UPF0355 protein SH2586.